Reading from the N-terminus, the 120-residue chain is Chaperonin GroEL (120 aa).

ATP is bound at residue 23–27 (DGTTT).

Belongs to the chaperonin (HSP60) family. In terms of assembly, forms a cylinder of 14 subunits composed of two heptameric rings stacked back-to-back. Interacts with the co-chaperonin GroES.

It localises to the cytoplasm. The enzyme catalyses ATP + H2O + a folded polypeptide = ADP + phosphate + an unfolded polypeptide.. Functionally, together with its co-chaperonin GroES, plays an essential role in assisting protein folding. The GroEL-GroES system forms a nano-cage that allows encapsulation of the non-native substrate proteins and provides a physical environment optimized to promote and accelerate protein folding. The protein is Chaperonin GroEL of Mycobacterium xenopi.